The sequence spans 329 residues: DNA-directed RNA polymerase subunit alpha (329 aa).

Positions 1–235 are alpha N-terminal domain (alpha-NTD); sequence MQGSVTEFLK…EQLDAFVDLR (235 aa). The tract at residues 249 to 329 is alpha C-terminal domain (alpha-CTD); that stretch reads FDPILLRPVD…NWPPASIAED (81 aa).

Belongs to the RNA polymerase alpha chain family. As to quaternary structure, homodimer. The RNAP catalytic core consists of 2 alpha, 1 beta, 1 beta' and 1 omega subunit. When a sigma factor is associated with the core the holoenzyme is formed, which can initiate transcription.

The enzyme catalyses RNA(n) + a ribonucleoside 5'-triphosphate = RNA(n+1) + diphosphate. DNA-dependent RNA polymerase catalyzes the transcription of DNA into RNA using the four ribonucleoside triphosphates as substrates. The polypeptide is DNA-directed RNA polymerase subunit alpha (Pasteurella multocida (strain Pm70)).